The following is a 478-amino-acid chain: Catalase easC (478 aa).

His54 is an active-site residue. Residue Tyr343 participates in heme binding. Residues 459 to 478 (VAEKARPDSPSRAQPGQLRL) are disordered.

This sequence belongs to the catalase family. Heme serves as cofactor.

Its pathway is alkaloid biosynthesis; ergot alkaloid biosynthesis. Its function is as follows. Catalase; part of the gene cluster that mediates the biosynthesis of fungal ergot alkaloid. DmaW catalyzes the first step of ergot alkaloid biosynthesis by condensing dimethylallyl diphosphate (DMAP) and tryptophan to form 4-dimethylallyl-L-tryptophan. The second step is catalyzed by the methyltransferase easF that methylates 4-dimethylallyl-L-tryptophan in the presence of S-adenosyl-L-methionine, resulting in the formation of 4-dimethylallyl-L-abrine. The catalase easC and the FAD-dependent oxidoreductase easE then transform 4-dimethylallyl-L-abrine to chanoclavine-I which is further oxidized by easD in the presence of NAD(+), resulting in the formation of chanoclavine-I aldehyde. Chanoclavine-I aldehyde is the precursor of ergoamides and ergopeptines in Clavicipitaceae, and clavine-type alcaloids such as fumiclavine in Trichocomaceae. However, the metabolites downstream of chanoclavine-I aldehyde in Arthrodermataceae have not been identified yet. The protein is Catalase easC of Arthroderma benhamiae (strain ATCC MYA-4681 / CBS 112371) (Trichophyton mentagrophytes).